An 89-amino-acid chain; its full sequence is Cell division protein FtsB (89 aa).

Residues methionine 1–proline 3 lie on the Cytoplasmic side of the membrane. Residues isoleucine 4–phenylalanine 21 form a helical membrane-spanning segment. The Periplasmic segment spans residues alanine 22–lysine 89. Residues valine 29–histidine 62 are a coiled coil.

The protein belongs to the FtsB family. As to quaternary structure, part of a complex composed of FtsB, FtsL and FtsQ.

The protein localises to the cell inner membrane. Its function is as follows. Essential cell division protein. May link together the upstream cell division proteins, which are predominantly cytoplasmic, with the downstream cell division proteins, which are predominantly periplasmic. This is Cell division protein FtsB from Coxiella burnetii (strain RSA 493 / Nine Mile phase I).